A 352-amino-acid polypeptide reads, in one-letter code: Anthranilate phosphoribosyltransferase (352 aa).

5-phospho-alpha-D-ribose 1-diphosphate-binding positions include glycine 82, 85–86 (GD), serine 90, 92–95 (NIST), 110–118 (KHGNRAVTG), and glycine 122. An anthranilate-binding site is contributed by glycine 82. Serine 94 contributes to the Mg(2+) binding site. Asparagine 113 lines the anthranilate pocket. Arginine 168 contacts anthranilate. Residues aspartate 232 and glutamate 233 each coordinate Mg(2+).

Belongs to the anthranilate phosphoribosyltransferase family. In terms of assembly, homodimer. Mg(2+) is required as a cofactor.

It carries out the reaction N-(5-phospho-beta-D-ribosyl)anthranilate + diphosphate = 5-phospho-alpha-D-ribose 1-diphosphate + anthranilate. It functions in the pathway amino-acid biosynthesis; L-tryptophan biosynthesis; L-tryptophan from chorismate: step 2/5. Catalyzes the transfer of the phosphoribosyl group of 5-phosphorylribose-1-pyrophosphate (PRPP) to anthranilate to yield N-(5'-phosphoribosyl)-anthranilate (PRA). The chain is Anthranilate phosphoribosyltransferase from Methanothermobacter thermautotrophicus (strain ATCC 29096 / DSM 1053 / JCM 10044 / NBRC 100330 / Delta H) (Methanobacterium thermoautotrophicum).